We begin with the raw amino-acid sequence, 397 residues long: Acetate kinase (397 aa).

A Mg(2+)-binding site is contributed by asparagine 8. Position 15 (lysine 15) interacts with ATP. Arginine 90 contributes to the substrate binding site. Aspartate 147 (proton donor/acceptor) is an active-site residue. 207-211 (HLGAG) contacts ATP. Position 382 (glutamate 382) interacts with Mg(2+).

The protein belongs to the acetokinase family. In terms of assembly, homodimer. Requires Mg(2+) as cofactor. Mn(2+) is required as a cofactor.

It localises to the cytoplasm. The enzyme catalyses acetate + ATP = acetyl phosphate + ADP. The protein operates within metabolic intermediate biosynthesis; acetyl-CoA biosynthesis; acetyl-CoA from acetate: step 1/2. In terms of biological role, catalyzes the formation of acetyl phosphate from acetate and ATP. Can also catalyze the reverse reaction. The chain is Acetate kinase from Lactiplantibacillus plantarum (strain ATCC BAA-793 / NCIMB 8826 / WCFS1) (Lactobacillus plantarum).